Consider the following 932-residue polypeptide: MKRFLWILLPPVLVVVARMHVEWVWFAQFNWQSVLFQRWMLQLLFAGAGSIPVFLAVLWLRAFDRIDDPPRQQKRPIDGMRFSLVLMVSGLAFLACSVVLSDLAILAWKQPFSLSHWQSTGHSMASEWKALLPIQLAIAGVSLCRPQLRRWVAVAMGFALVLVVSRAWGVWSLAWLIPDEGLREPLLGTDLSFGLGRFSAIQLGLELLVLSGTFTTAHAVWGRVTVSPHLSDWSMPALGNRSYRWLSIGVGTNLLGVAGLVWLSRHQLLWHQHGLVAGAGWLQQHLTLPFRSLLAFVLLVLGVSCIVRGIGHLQRLLLLCVAAIVIIESTLTPLTRWLVVRPQELALQAPYLETAIRSTRHGFQLDRIQRRRTEPNVDLTEEDLESGASTLRNVRLWDSGPLLETNRQLQQLRVYYRFSNAAVDRYPLIPDSDTSQQVIISARELDQSALPRRSKTWQNRHFVFTHGNGFTVSPVNTRGTDGLPSYVISDLGSNTRIEGNRDLGIKRKDVEAAIPAQNAALYFGMLPSPYAVVPTEVDEFDYPDGDLNVYSHYAGSAGVPIGSLIQRLCASIYLAEPRLLTTKAIQKDSRVLLRREVRQRIRAIAPFLDLRGDPYLVSVPGDNLELGTSGNRIQHQFWIAEGYTHSATYAYSAAVSKTDSDRYLRNSVKVVVDAYNGSMRLFVSEPDDPIIKSWQKLFPQLFESIESMPNILKAHLLVPEDFFKVQVSQLQRYHVEDPRIFYSGDDVWQVPLEVYGGEQISVEPYHITAQIEGNNSSEFLLLQPLTPLARPNLTAWLAARNDAEHYGELLLIDFPKDRPILGPEQIQALINQDPEVSKVFSLWDGGGSELVQGNLLVLPVGTSLLYVEPVYLKATKGGLPSLVRIVVSDGRGIAMDVNLSAAIDRLIKKTPYGITEGVSTDRLDESRKRSIS.

The next 9 membrane-spanning stretches (helical) occupy residues 4–24, 40–60, 85–105, 124–144, 151–171, 201–221, 243–263, 293–313, and 315–335; these read FLWILLPPVLVVVARMHVEWV, MLQLLFAGAGSIPVFLAVLWL, VLMVSGLAFLACSVVLSDLAI, MASEWKALLPIQLAIAGVSLC, WVAVAMGFALVLVVSRAWGVW, IQLGLELLVLSGTFTTAHAVW, YRWLSIGVGTNLLGVAGLVWL, LLAFVLLVLGVSCIVRGIGHL, and RLLLLCVAAIVIIESTLTPLT.

The protein belongs to the UPF0182 family.

Its subcellular location is the cell membrane. The protein is UPF0182 protein Syncc9902_1151 of Synechococcus sp. (strain CC9902).